The following is a 293-amino-acid chain: Ribosomal RNA small subunit methyltransferase A (293 aa).

S-adenosyl-L-methionine is bound by residues N38, V40, G65, E86, D116, and N135.

Belongs to the class I-like SAM-binding methyltransferase superfamily. rRNA adenine N(6)-methyltransferase family. RsmA subfamily.

The protein resides in the cytoplasm. The catalysed reaction is adenosine(1518)/adenosine(1519) in 16S rRNA + 4 S-adenosyl-L-methionine = N(6)-dimethyladenosine(1518)/N(6)-dimethyladenosine(1519) in 16S rRNA + 4 S-adenosyl-L-homocysteine + 4 H(+). Functionally, specifically dimethylates two adjacent adenosines (A1518 and A1519) in the loop of a conserved hairpin near the 3'-end of 16S rRNA in the 30S particle. May play a critical role in biogenesis of 30S subunits. The protein is Ribosomal RNA small subunit methyltransferase A of Nocardia farcinica (strain IFM 10152).